Consider the following 269-residue polypeptide: Zinc finger protein SNAI2 (269 aa).

The tract at residues 1–20 (MPRSFLVKKHFNASKKPNYS) is SNAG domain. A disordered region spans residues 81-117 (SSSLGRVSPPPSSDTSSKDHSGSESPISDEEERLQPK). C2H2-type zinc fingers lie at residues 129 to 151 (FQCNLCNKTYSTFSGLAKHKQLH), 160 to 182 (FSCKYCDKEYVSLGALKMHIRTH), 186 to 208 (CVCKICGKAFSRPWLLQGHIRTH), and 214 to 236 (FSCPHCNRAFADRSNLRAHLQTH). The segment at 242–265 (YQCKNCSKTFSRMSLLHKHEESGC) adopts a C2H2-type 5; atypical zinc-finger fold.

It belongs to the snail C2H2-type zinc-finger protein family. Interacts (via SNAG domain) with LIMD1 (via LIM domains), WTIP (via LIM domains) and AJUBA (via LIM domains). Interacts (via zinc fingers) with KPNA2, KPNB1, and TNPO1. May interact (via zinc fingers) with IPO7. Phosphorylated by GSK3B. Once phosphorylated, it becomes a target for ubiquitination. Post-translationally, ubiquitinated by the SCF(FBXO11) complex; ubiquitination requires previous GSK3B-mediated SNAI2 phosphorylation.

Its subcellular location is the nucleus. It localises to the cytoplasm. Transcriptional repressor that modulates both activator-dependent and basal transcription. Involved in the generation and migration of neural crest cells. Plays a role in mediating RAF1-induced transcriptional repression of the TJ protein, occludin (OCLN) and subsequent oncogenic transformation of epithelial cells. Represses BRCA2 expression by binding to its E2-box-containing silencer and recruiting CTBP1 and HDAC1 in breast cells. In epidermal keratinocytes, binds to the E-box in ITGA3 promoter and represses its transcription. Involved in the regulation of ITGB1 and ITGB4 expression and cell adhesion and proliferation in epidermal keratinocytes. Binds to E-box2 domain of BSG and activates its expression during TGFB1-induced epithelial-mesenchymal transition (EMT) in hepatocytes. Represses E-Cadherin/CDH1 transcription via E-box elements. Involved in osteoblast maturation. Binds to RUNX2 and SOC9 promoters and may act as a positive and negative transcription regulator, respectively, in osteoblasts. Binds to CXCL12 promoter via E-box regions in mesenchymal stem cells and osteoblasts. Plays an essential role in TWIST1-induced EMT and its ability to promote invasion and metastasis. This chain is Zinc finger protein SNAI2 (Snai2), found in Mus musculus (Mouse).